Here is a 155-residue protein sequence, read N- to C-terminus: SsrA-binding protein (155 aa).

The protein belongs to the SmpB family.

It localises to the cytoplasm. Required for rescue of stalled ribosomes mediated by trans-translation. Binds to transfer-messenger RNA (tmRNA), required for stable association of tmRNA with ribosomes. tmRNA and SmpB together mimic tRNA shape, replacing the anticodon stem-loop with SmpB. tmRNA is encoded by the ssrA gene; the 2 termini fold to resemble tRNA(Ala) and it encodes a 'tag peptide', a short internal open reading frame. During trans-translation Ala-aminoacylated tmRNA acts like a tRNA, entering the A-site of stalled ribosomes, displacing the stalled mRNA. The ribosome then switches to translate the ORF on the tmRNA; the nascent peptide is terminated with the 'tag peptide' encoded by the tmRNA and targeted for degradation. The ribosome is freed to recommence translation, which seems to be the essential function of trans-translation. The protein is SsrA-binding protein of Bacillus cytotoxicus (strain DSM 22905 / CIP 110041 / 391-98 / NVH 391-98).